Reading from the N-terminus, the 351-residue chain is sn-glycerol-3-phosphate import ATP-binding protein UgpC (351 aa).

The region spanning 4–235 (IVLDNVRKSY…PASTFVATFI (232 aa)) is the ABC transporter domain. 37 to 44 (GPSGCGKS) serves as a coordination point for ATP.

This sequence belongs to the ABC transporter superfamily. sn-glycerol-3-phosphate importer (TC 3.A.1.1.3) family. The complex is composed of two ATP-binding proteins (UgpC), two transmembrane proteins (UgpA and UgpE) and a solute-binding protein (UgpB).

The protein localises to the cell inner membrane. It catalyses the reaction sn-glycerol 3-phosphate(out) + ATP + H2O = sn-glycerol 3-phosphate(in) + ADP + phosphate + H(+). In terms of biological role, part of the ABC transporter complex UgpBAEC involved in sn-glycerol-3-phosphate (G3P) import. Responsible for energy coupling to the transport system. This Brucella abortus (strain 2308) protein is sn-glycerol-3-phosphate import ATP-binding protein UgpC.